Consider the following 860-residue polypeptide: DNA mismatch repair protein MutS (860 aa).

Position 620-627 (620-627 (GPNMGGKS)) interacts with ATP.

This sequence belongs to the DNA mismatch repair MutS family.

This protein is involved in the repair of mismatches in DNA. It is possible that it carries out the mismatch recognition step. This protein has a weak ATPase activity. This Dechloromonas aromatica (strain RCB) protein is DNA mismatch repair protein MutS.